The primary structure comprises 387 residues: F-box only protein 4 (387 aa).

A phosphoserine mark is found at serine 11, serine 12, and serine 48. The 47-residue stretch at 56–102 (ASSLTRLPIDVQLYILSFLSPHDLCQLGSTSRYWNETVRDPILWRYF) folds into the F-box domain.

Homodimer. Part of the SCF (SKP1-CUL1-F-box) E3 ubiquitin-protein ligase complex SCF(FBXO4) formed of CUL1, SKP1, RBX1 and FBXO4. Interacts with TERF1; this interaction is prevented in the presence of GNL3L. Identified in a complex with CRYAB and CCND1. Post-translationally, phosphorylation at Ser-11 varies during the cell cycle. It is low in resting cells and high in the S phase and the G2/M phase of the cell cycle. Phosphorylation is decreased during late G1 phase. Phosphorylation at Ser-11 promotes homodimerization and is necessary for optimal ubiquitin ligase activity towards CCND1.

It is found in the cytoplasm. Its pathway is protein modification; protein ubiquitination. Substrate recognition component of a SCF (SKP1-CUL1-F-box protein) E3 ubiquitin-protein ligase complex that mediates the ubiquitination and subsequent proteasomal degradation of target proteins. Promotes ubiquitination of cyclin-D1 (CCND1) and its subsequent proteasomal degradation. However, it does not act as a major regulator of CCND1 stability during the G1/S transition. Recognizes TERF1 and promotes its ubiquitination together with UBE2D1. Promotes ubiquitination of FXR1 following phosphorylation of FXR1 by GSK3B, leading to FXR1 degradation by the proteasome. The polypeptide is F-box only protein 4 (FBXO4) (Bos taurus (Bovine)).